Consider the following 221-residue polypeptide: Large ribosomal subunit protein uL4 (221 aa).

Positions 56 to 83 are disordered; sequence HATKTRGMVSGGGRKPWKQKGTGRARQG.

Belongs to the universal ribosomal protein uL4 family. In terms of assembly, part of the 50S ribosomal subunit.

Its function is as follows. One of the primary rRNA binding proteins, this protein initially binds near the 5'-end of the 23S rRNA. It is important during the early stages of 50S assembly. It makes multiple contacts with different domains of the 23S rRNA in the assembled 50S subunit and ribosome. Functionally, forms part of the polypeptide exit tunnel. This is Large ribosomal subunit protein uL4 from Bifidobacterium adolescentis (strain ATCC 15703 / DSM 20083 / NCTC 11814 / E194a).